The following is a 163-amino-acid chain: ADP-ribosylation factor-like protein 2-binding protein (163 aa).

This sequence belongs to the ARL2BP family. As to quaternary structure, interacts with GTP bound ARL2 and ARL3; the complex ARL2-ARL2BP as well as ARL2BP alone, binds to SLC25A4/ANT1. Interaction with ARL2 may be required for cilia basal body localization. Interacts with STAT3; interaction is enhanced with ARL2. Found in a complex with ARL2BP, ARL2 and SLC25A6. Found in a complex with ARL2, ARL2BP and SLC25A4. Interacts with STAT2, STAT3 and STAT4. In terms of tissue distribution, ubiquitous with higher expression in brain, especially in hippocampus and cortex. Also expressed in lung, cerebellum, liver, kidney, spleen and heart (at protein level).

It localises to the cytoplasm. Its subcellular location is the mitochondrion intermembrane space. The protein resides in the cytoskeleton. The protein localises to the microtubule organizing center. It is found in the centrosome. It localises to the nucleus. Its subcellular location is the spindle. The protein resides in the cilium basal body. Together with ARL2, plays a role in the nuclear translocation, retention and transcriptional activity of STAT3. May play a role as an effector of ARL2. This Rattus norvegicus (Rat) protein is ADP-ribosylation factor-like protein 2-binding protein (Arl2bp).